Reading from the N-terminus, the 218-residue chain is Type II restriction enzyme KpnI (218 aa).

The catalysed reaction is Endonucleolytic cleavage of DNA to give specific double-stranded fragments with terminal 5'-phosphates.. In terms of biological role, a P subtype restriction enzyme that recognizes the double-stranded sequence 5'-GGTACC-3' and cleaves after C-5. The protein is Type II restriction enzyme KpnI of Klebsiella pneumoniae.